The primary structure comprises 566 residues: Proline--tRNA ligase (566 aa).

It belongs to the class-II aminoacyl-tRNA synthetase family. ProS type 1 subfamily. In terms of assembly, homodimer.

Its subcellular location is the cytoplasm. The catalysed reaction is tRNA(Pro) + L-proline + ATP = L-prolyl-tRNA(Pro) + AMP + diphosphate. In terms of biological role, catalyzes the attachment of proline to tRNA(Pro) in a two-step reaction: proline is first activated by ATP to form Pro-AMP and then transferred to the acceptor end of tRNA(Pro). As ProRS can inadvertently accommodate and process non-cognate amino acids such as alanine and cysteine, to avoid such errors it has two additional distinct editing activities against alanine. One activity is designated as 'pretransfer' editing and involves the tRNA(Pro)-independent hydrolysis of activated Ala-AMP. The other activity is designated 'posttransfer' editing and involves deacylation of mischarged Ala-tRNA(Pro). The misacylated Cys-tRNA(Pro) is not edited by ProRS. The sequence is that of Proline--tRNA ligase from Bacillus cereus (strain AH187).